The sequence spans 84 residues: Large ribosomal subunit protein bL31B (84 aa).

This sequence belongs to the bacterial ribosomal protein bL31 family. Type B subfamily. As to quaternary structure, part of the 50S ribosomal subunit.

The chain is Large ribosomal subunit protein bL31B from Rhodococcus opacus (strain B4).